The sequence spans 419 residues: L-rhamnose isomerase (419 aa).

The Mn(2+) site is built by histidine 262, aspartate 294, and aspartate 296.

This sequence belongs to the rhamnose isomerase family. In terms of assembly, homotetramer. Requires Mn(2+) as cofactor.

It localises to the cytoplasm. It catalyses the reaction L-rhamnopyranose = L-rhamnulose. It participates in carbohydrate degradation; L-rhamnose degradation; glycerone phosphate from L-rhamnose: step 1/3. Its function is as follows. Catalyzes the interconversion of L-rhamnose and L-rhamnulose. This is L-rhamnose isomerase from Shigella boydii serotype 4 (strain Sb227).